Here is a 490-residue protein sequence, read N- to C-terminus: ATP synthase subunit beta, plastid (490 aa).

170–177 (GGAGVGKT) is an ATP binding site.

This sequence belongs to the ATPase alpha/beta chains family. In terms of assembly, F-type ATPases have 2 components, CF(1) - the catalytic core - and CF(0) - the membrane proton channel. CF(1) has five subunits: alpha(3), beta(3), gamma(1), delta(1), epsilon(1). CF(0) has four main subunits: a(1), b(1), b'(1) and c(9-12).

It is found in the plastid thylakoid membrane. It carries out the reaction ATP + H2O + 4 H(+)(in) = ADP + phosphate + 5 H(+)(out). Its function is as follows. Produces ATP from ADP in the presence of a proton gradient across the membrane. The catalytic sites are hosted primarily by the beta subunits. This chain is ATP synthase subunit beta, plastid, found in Cuscuta reflexa (Southern Asian dodder).